We begin with the raw amino-acid sequence, 450 residues long: uncharacterized protein (450 aa).

Residues 1–58 (MAKGEIVTVKIEEMDFKGYGVGYCEGKPLKVRGGILGQRVAVRVKKGKKGRAEGEIVE) enclose the TRAM domain. The [4Fe-4S] cluster site is built by Cys71, Cys77, Cys80, and Cys159. S-adenosyl-L-methionine is bound by residues Gln285, Tyr314, Glu335, and Asp380. Cys407 (nucleophile) is an active-site residue.

It belongs to the class I-like SAM-binding methyltransferase superfamily. RNA M5U methyltransferase family.

This is an uncharacterized protein from Caldanaerobacter subterraneus subsp. tengcongensis (strain DSM 15242 / JCM 11007 / NBRC 100824 / MB4) (Thermoanaerobacter tengcongensis).